The chain runs to 271 residues: Probable L,D-transpeptidase 3 (271 aa).

The L,D-TPase catalytic domain occupies Val127–Gln270. His228 functions as the Proton donor/acceptor in the catalytic mechanism. The Nucleophile role is filled by Cys246.

The protein operates within cell wall biogenesis; peptidoglycan biosynthesis. With respect to regulation, is irreversibly inactivated by the beta-lactam carbapenems via the formation of a covalent adduct resulting from acylation of the catalytic Cys. Imipenem is the most efficient drug for in vitro LdtMt3/Rv1433 inactivation. In terms of biological role, probable L,D-transpeptidase that may perform as-yet-unknown cross-linking reactions in M.tuberculosis. Is not able to generate 3-&gt;3 cross-links in peptidoglycan, using tetrapeptide stems as acyl donor substrates. May function in the anchoring of proteins to peptidoglycan. The protein is Probable L,D-transpeptidase 3 of Mycobacterium tuberculosis (strain ATCC 25618 / H37Rv).